The chain runs to 170 residues: Large ribosomal subunit protein uL10 (170 aa).

The protein belongs to the universal ribosomal protein uL10 family. Part of the ribosomal stalk of the 50S ribosomal subunit. The N-terminus interacts with L11 and the large rRNA to form the base of the stalk. The C-terminus forms an elongated spine to which L12 dimers bind in a sequential fashion forming a multimeric L10(L12)X complex.

Functionally, forms part of the ribosomal stalk, playing a central role in the interaction of the ribosome with GTP-bound translation factors. The sequence is that of Large ribosomal subunit protein uL10 from Corynebacterium urealyticum (strain ATCC 43042 / DSM 7109).